Here is a 210-residue protein sequence, read N- to C-terminus: DNA replication complex GINS protein PSF3 (210 aa).

It belongs to the GINS3/PSF3 family. In terms of assembly, component of the GINS complex which is a heterotetramer of gins1/psf1, gins2/psf2, gins3/psf3 and gins4/sld5. Component of the CMG helicase complex, composed of the mcm2-7 complex, the GINS complex and cdc45.

The protein localises to the nucleus. The protein resides in the chromosome. In terms of biological role, required for correct functioning of the GINS complex, a complex that plays an essential role in the initiation of DNA replication, and progression of DNA replication forks. GINS complex is a core component of CDC45-MCM-GINS (CMG) helicase, the molecular machine that unwinds template DNA during replication, and around which the replisome is built. The chain is DNA replication complex GINS protein PSF3 from Xenopus laevis (African clawed frog).